The primary structure comprises 383 residues: 1-deoxy-D-xylulose 5-phosphate reductoisomerase (383 aa).

8 residues coordinate NADPH: Thr10, Gly11, Ser12, Ile13, Gly36, Lys37, Asn38, and Asn122. Lys123 provides a ligand contact to 1-deoxy-D-xylulose 5-phosphate. Residue Glu124 participates in NADPH binding. Residue Asp148 coordinates Mn(2+). 4 residues coordinate 1-deoxy-D-xylulose 5-phosphate: Ser149, Glu150, Ser174, and His197. Mn(2+) is bound at residue Glu150. Gly203 contributes to the NADPH binding site. 4 residues coordinate 1-deoxy-D-xylulose 5-phosphate: Ser210, Asn215, Lys216, and Glu219. Glu219 is a binding site for Mn(2+).

It belongs to the DXR family. Requires Mg(2+) as cofactor. The cofactor is Mn(2+).

The catalysed reaction is 2-C-methyl-D-erythritol 4-phosphate + NADP(+) = 1-deoxy-D-xylulose 5-phosphate + NADPH + H(+). Its pathway is isoprenoid biosynthesis; isopentenyl diphosphate biosynthesis via DXP pathway; isopentenyl diphosphate from 1-deoxy-D-xylulose 5-phosphate: step 1/6. Its function is as follows. Catalyzes the NADPH-dependent rearrangement and reduction of 1-deoxy-D-xylulose-5-phosphate (DXP) to 2-C-methyl-D-erythritol 4-phosphate (MEP). This Bacillus licheniformis (strain ATCC 14580 / DSM 13 / JCM 2505 / CCUG 7422 / NBRC 12200 / NCIMB 9375 / NCTC 10341 / NRRL NRS-1264 / Gibson 46) protein is 1-deoxy-D-xylulose 5-phosphate reductoisomerase.